A 465-amino-acid polypeptide reads, in one-letter code: Ras GTPase-activating protein-binding protein 1 (465 aa).

The 123-residue stretch at 11–133 folds into the NTF2 domain; sequence VGREFVRQYY…FYVHNDIFRY (123 aa). Glycyl lysine isopeptide (Lys-Gly) (interchain with G-Cter in ubiquitin) cross-links involve residues lysine 36, lysine 50, lysine 59, lysine 64, lysine 76, and lysine 123. Positions 142–224 are acidic disordered region; that stretch reads ITEPQEESEE…EPVLEETAPE (83 aa). At threonine 143 the chain carries Phosphothreonine. Composition is skewed to acidic residues over residues 145 to 157 and 184 to 205; these read PQEESEEEVEEPE and EHLEEPVAEPEPEPEPEPEQEP. The interval 145–242 is disordered; the sequence is PQEESEEEVE…APADIAQTVQ (98 aa). Position 149 is a phosphoserine (serine 149). A phosphoserine mark is found at serine 230, serine 231, serine 249, and serine 252. Positions 254–326 are disordered; sequence TSKNLPPSGA…PVREAGEQGD (73 aa). Basic and acidic residues-rich tracts occupy residues 296–306 and 317–326; these read PQRDQRVREQR and PVREAGEQGD. Positions 339 to 414 constitute an RRM domain; it reads HQLFIGNLPH…VRLNVEEKKT (76 aa). Glycyl lysine isopeptide (Lys-Gly) (interchain with G-Cter in ubiquitin) cross-links involve residues lysine 352 and lysine 356. Serine 372 is modified (phosphoserine). Lysine 375 is covalently cross-linked (Glycyl lysine isopeptide (Lys-Gly) (interchain with G-Cter in ubiquitin)). At lysine 375 the chain carries N6-acetyllysine; alternate. Residue lysine 375 forms a Glycyl lysine isopeptide (Lys-Gly) (interchain with G-Cter in SUMO2); alternate linkage. Lysine 392 participates in a covalent cross-link: Glycyl lysine isopeptide (Lys-Gly) (interchain with G-Cter in ubiquitin); alternate. Residues 409–465 are RG-rich region; it reads VEEKKTRAAREGDRRDNRLRGPGGPRGGLGGGMRGPPRGGMVQKPGFGVGRSIAPRQ. Positions 412-427 are enriched in basic and acidic residues; it reads KKTRAAREGDRRDNRL. The tract at residues 412-465 is disordered; it reads KKTRAAREGDRRDNRLRGPGGPRGGLGGGMRGPPRGGMVQKPGFGVGRSIAPRQ. At arginine 428 the chain carries Asymmetric dimethylarginine. Over residues 429 to 446 the composition is skewed to gly residues; the sequence is GPGGPRGGLGGGMRGPPR. Arginine 434 carries the post-translational modification Asymmetric dimethylarginine; alternate. Omega-N-methylarginine; alternate is present on residues arginine 434, arginine 446, arginine 459, and arginine 464. Arginine 459 bears the Dimethylated arginine; alternate mark.

In terms of assembly, homodimer and oligomer. Component of a TAU mRNP complex, at least composed of IGF2BP1, ELAVL4 and G3BP1. Binds to the SH3 domain of Ras GTPase-activating protein (RASA1) in proliferating cells. No interaction in quiescent cells. Interacts (via NTF2 domain) with USP10; inhibiting stress granule formation by lowering G3BP1 valence. Interacts (via NTF2 domain) with CAPRIN1; promoting stress granule formation by lowering the saturation-concentration of G3BP1. Interacts (via NTF2 domain) with UBAP2L; promoting stress granule formation. Associates (via RG-rich region) with 40S ribosome subunits. Interacts with RPTOR and SPAG5; this complex is increased by oxidative stress. Interacts with ATXN2L. Interacts with STYXL1. Interacts with CGAS (via N-terminus); this interaction promotes the DNA-binding and activation of CGAS. Interacts (via C-terminus) with RIGI. Interacts with PABPC1. Interacts with QKI (isoforms QKI6 and QKI7); directing N(7)-methylguanine-containing mRNAs to stress granules. Mg(2+) serves as cofactor. Phosphorylation of the acidic disordered region regulates stress granule assembly. RASA1-dependent phosphorylation of Ser-149 induces a conformational change that prevents self-association. Dephosphorylation after HRAS activation is required for stress granule assembly. Ser-149 phosphorylation induces partial nuclear localization. Post-translationally, arg-435 is dimethylated, probably to asymmetric dimethylarginine. In terms of processing, ubiquitinated by TRIM21 via 'Lys-63'-linked polyubiquitination in the NTF2 domain in response to heat shock, leading to stress granule disassembly: ubiquitination promotes interaction with the FAF2 adapter, followed by interaction with VCP, which extracts G3BP1 from stress granules, leading to stress granule disassembly. In case of prolonged stress, ubiquitination by TRIM21 leads to autophagy-dependent degradation of G3BP1 via recruitment of ubiquitinated G3BP1 by SQSTM1 and/or CALCOCO2 to autophagosomes.

The protein resides in the cytoplasm. It localises to the cytosol. Its subcellular location is the perikaryon. It is found in the stress granule. The protein localises to the nucleus. It carries out the reaction ATP + H2O = ADP + phosphate + H(+). Its activity is regulated as follows. Under physiological conditions, G3BP1 adopts a compact state that is stabilized by intramolecular interactions between the RG-rich and the acidic regions that inhibit phase separation. Upon stress, polysomes disassemble and mRNAs are released in an unfolded protein-free state. Binding of unfolded mRNA to G3BP1 outcompetes the intramolecular interactions and RNA-bound G3BP1 adopts an expanded conformation in which the RG-rich region becomes exposed to engage in protein-protein and protein-RNA interactions, allowing physical cross-linking of RNA molecules to form protein-RNA condensates, leading to liquid-liquid phase separation (LLPS). Protein involved in various processes, such as stress granule formation and innate immunity. Plays an essential role in stress granule formation. Stress granules are membraneless compartments that store mRNAs and proteins, such as stalled translation pre-initiation complexes, in response to stress. Promotes formation of stress granules phase-separated membraneless compartment by undergoing liquid-liquid phase separation (LLPS) upon unfolded RNA-binding: functions as a molecular switch that triggers RNA-dependent LLPS in response to a rise in intracellular free RNA concentrations. Also acts as an ATP- and magnesium-dependent helicase: unwinds DNA/DNA, RNA/DNA, and RNA/RNA substrates with comparable efficiency. Acts unidirectionally by moving in the 5' to 3' direction along the bound single-stranded DNA. Unwinds preferentially partial DNA and RNA duplexes having a 17 bp annealed portion and either a hanging 3' tail or hanging tails at both 5'- and 3'-ends. Plays an essential role in innate immunity by promoting CGAS and RIGI activity. Participates in the DNA-triggered cGAS/STING pathway by promoting the DNA binding and activation of CGAS. Triggers the condensation of cGAS, a process probably linked to the formation of membrane-less organelles. Also enhances RIGI-induced type I interferon production probably by helping RIGI at sensing pathogenic RNA. May also act as a phosphorylation-dependent sequence-specific endoribonuclease in vitro: Cleaves exclusively between cytosine and adenine and cleaves MYC mRNA preferentially at the 3'-UTR. The chain is Ras GTPase-activating protein-binding protein 1 (G3BP1) from Bos taurus (Bovine).